Consider the following 538-residue polypeptide: Putative cysteine ligase BshC (538 aa).

A coiled-coil region spans residues 460 to 484 (KINEQIELLERMLKRNVEKKHEVEL).

Belongs to the BshC family.

Involved in bacillithiol (BSH) biosynthesis. May catalyze the last step of the pathway, the addition of cysteine to glucosamine malate (GlcN-Mal) to generate BSH. The polypeptide is Putative cysteine ligase BshC (Bacillus thuringiensis subsp. konkukian (strain 97-27)).